Reading from the N-terminus, the 682-residue chain is Penicillin-binding protein activator LpoA (682 aa).

The first 26 residues, 1–26 (MLSSITVRTKSGRLIPLVLAATLLAA), serve as a signal peptide directing secretion. C27 carries N-palmitoyl cysteine lipidation. A lipid anchor (S-diacylglycerol cysteine) is attached at C27.

It belongs to the LpoA family. As to quaternary structure, interacts with PBP1a.

It is found in the cell outer membrane. Functionally, regulator of peptidoglycan synthesis that is essential for the function of penicillin-binding protein 1A (PBP1a). The sequence is that of Penicillin-binding protein activator LpoA from Edwardsiella ictaluri (strain 93-146).